We begin with the raw amino-acid sequence, 240 residues long: Adenosylcobinamide-GDP ribazoletransferase (240 aa).

5 helical membrane passes run 31–51, 62–81, 109–129, 133–153, and 179–199; these read LLYY…ASHL, ALLL…DGLA, IAVV…WVLV, IGAQ…GLFL, and VLLV…LLAL.

The protein belongs to the CobS family. Mg(2+) is required as a cofactor.

The protein localises to the cell inner membrane. The catalysed reaction is alpha-ribazole + adenosylcob(III)inamide-GDP = adenosylcob(III)alamin + GMP + H(+). It carries out the reaction alpha-ribazole 5'-phosphate + adenosylcob(III)inamide-GDP = adenosylcob(III)alamin 5'-phosphate + GMP + H(+). Its pathway is cofactor biosynthesis; adenosylcobalamin biosynthesis; adenosylcobalamin from cob(II)yrinate a,c-diamide: step 7/7. Joins adenosylcobinamide-GDP and alpha-ribazole to generate adenosylcobalamin (Ado-cobalamin). Also synthesizes adenosylcobalamin 5'-phosphate from adenosylcobinamide-GDP and alpha-ribazole 5'-phosphate. The polypeptide is Adenosylcobinamide-GDP ribazoletransferase (Pseudomonas putida (strain ATCC 47054 / DSM 6125 / CFBP 8728 / NCIMB 11950 / KT2440)).